Reading from the N-terminus, the 500-residue chain is L-arabinose isomerase (500 aa).

Glu306, Glu333, His349, and His448 together coordinate Mn(2+).

Belongs to the arabinose isomerase family. It depends on Mn(2+) as a cofactor.

It carries out the reaction beta-L-arabinopyranose = L-ribulose. It functions in the pathway carbohydrate degradation; L-arabinose degradation via L-ribulose; D-xylulose 5-phosphate from L-arabinose (bacterial route): step 1/3. In terms of biological role, catalyzes the conversion of L-arabinose to L-ribulose. The sequence is that of L-arabinose isomerase from Shewanella sp. (strain MR-4).